An 841-amino-acid polypeptide reads, in one-letter code: Protein translocase subunit SecA (841 aa).

ATP contacts are provided by residues glutamine 87, 105–109 (GEGKT), and aspartate 494. The Zn(2+) site is built by cysteine 825, cysteine 827, cysteine 836, and cysteine 837.

It belongs to the SecA family. Monomer and homodimer. Part of the essential Sec protein translocation apparatus which comprises SecA, SecYEG and auxiliary proteins SecDF-YajC and YidC. Requires Zn(2+) as cofactor.

Its subcellular location is the cell inner membrane. It is found in the cytoplasm. It carries out the reaction ATP + H2O + cellular proteinSide 1 = ADP + phosphate + cellular proteinSide 2.. Functionally, part of the Sec protein translocase complex. Interacts with the SecYEG preprotein conducting channel. Has a central role in coupling the hydrolysis of ATP to the transfer of proteins into and across the cell membrane, serving as an ATP-driven molecular motor driving the stepwise translocation of polypeptide chains across the membrane. This is Protein translocase subunit SecA from Syntrophus aciditrophicus (strain SB).